Here is a 154-residue protein sequence, read N- to C-terminus: UPF0178 protein in pahZ1 5'region (154 aa).

It belongs to the UPF0178 family.

The protein is UPF0178 protein in pahZ1 5'region of Paucimonas lemoignei (Pseudomonas lemoignei).